Reading from the N-terminus, the 325-residue chain is Sulfite dehydrogenase subunit C (325 aa).

Transmembrane regions (helical) follow at residues 5–25, 43–63, 87–107, 126–146, 165–185, 186–206, 266–286, and 290–310; these read FSVI…LAMV, FYAV…GASF, EVIV…AHWF, LLLG…TAMI, FLFL…AYIG, NPLV…GLAS, VYLV…YLIG, and LPII…WSFF.

Belongs to the DmsC family. As to quaternary structure, forms a heterotrimeric membrane-bound complex composed of a catalytic heterodimer (SoeAB) and a membrane anchor protein (SoeC).

Its subcellular location is the cell inner membrane. Part of the SoeABC complex that catalyzes the oxidation of sulfite to sulfate. SoeC probably anchors and stabilizes the catalytic subunits. This Allochromatium vinosum (strain ATCC 17899 / DSM 180 / NBRC 103801 / NCIMB 10441 / D) (Chromatium vinosum) protein is Sulfite dehydrogenase subunit C.